Reading from the N-terminus, the 264-residue chain is TLC domain-containing protein 4-B (264 aa).

6 helical membrane-spanning segments follow: residues 6-26 (VYVV…VSPV), 50-70 (LVST…LWYD), 84-104 (LVKL…LLLA), 110-130 (MGDV…GYVL), 169-189 (LVVA…IAVM), and 210-230 (LAIQ…NIIW). The TLC domain maps to 41 to 243 (NKLNDWNSRL…IARGCYKVIT (203 aa)).

The protein belongs to the TLCD4 family.

The protein localises to the membrane. In Danio rerio (Zebrafish), this protein is TLC domain-containing protein 4-B (tlcd4b).